The sequence spans 190 residues: Endo-1,4-beta-xylanase (190 aa).

One can recognise a GH11 domain in the interval 1–190; the sequence is QTIGPGTGYS…SSGSASITVS (190 aa). Glu-86 acts as the Nucleophile in catalysis. The active-site Proton donor is Glu-177.

The protein belongs to the glycosyl hydrolase 11 (cellulase G) family.

The catalysed reaction is Endohydrolysis of (1-&gt;4)-beta-D-xylosidic linkages in xylans.. It functions in the pathway glycan degradation; xylan degradation. The chain is Endo-1,4-beta-xylanase from Trichoderma harzianum (Hypocrea lixii).